A 332-amino-acid polypeptide reads, in one-letter code: Formamidase (332 aa).

One can recognise a CN hydrolase domain in the interval 14–259; it reads FLTALIQYPV…WEIVTAEVYP (246 aa). Glutamate 60 (proton acceptor) is an active-site residue. Lysine 132 functions as the Proton donor in the catalytic mechanism. Cysteine 165 (nucleophile) is an active-site residue.

The protein belongs to the carbon-nitrogen hydrolase superfamily. Aliphatic amidase family.

The catalysed reaction is formamide + H2O = formate + NH4(+). Its function is as follows. Is an aliphatic amidase with a restricted substrate specificity, as it only hydrolyzes formamide. The polypeptide is Formamidase (Bacillus cereus (strain G9842)).